The sequence spans 733 residues: Submandibular gland protein C (733 aa).

The N-terminal stretch at 1–20 (MKLILLYLAVVLCFVGKARS) is a signal peptide. The disordered stretch occupies residues 48-91 (KSSGGSKDYNLSDGGKSNSRKNLSPATGGSATQQSNLDDSHAPN). N-linked (GlcNAc...) asparagine glycosylation occurs at Asn57. The span at 62–84 (GKSNSRKNLSPATGGSATQQSNL) shows a compositional bias: polar residues. Asn141 and Asn187 each carry an N-linked (GlcNAc...) asparagine glycan. Disordered stretches follow at residues 172–204 (GQQA…ADKP), 249–330 (LTED…NSSN), 369–450 (LTED…NSSN), and 496–733 (SVTE…PSVA). Residues 186-199 (ENSSLSTGSATSNK) show a composition bias toward polar residues. A compositionally biased stretch (low complexity) spans 256 to 270 (TSTSASVSGDSSTSS). The span at 300-318 (GSKQNVEDSTLSTGSATSN) shows a compositional bias: polar residues. N-linked (GlcNAc...) asparagine glycosylation occurs at Asn327. Over residues 376–390 (TSTSASVSGDSSTSS) the composition is skewed to low complexity. Polar residues predominate over residues 420–438 (GSKQNVEDSTLSTGSATSN). N-linked (GlcNAc...) asparagine glycans are attached at residues Asn447, Asn514, and Asn528. Composition is skewed to polar residues over residues 496 to 516 (SVTE…NNLS) and 525 to 535 (NPTNGSSSASS). The span at 538–552 (KPYEEGMRKLLKFLE) shows a compositional bias: basic and acidic residues. Low complexity-rich tracts occupy residues 563 to 574 (SVSGMSSESSRS) and 609 to 619 (SSNSSTGSATS). Residue Asn611 is glycosylated (N-linked (GlcNAc...) asparagine). The segment covering 654–665 (GFNGPEGVGENN) has biased composition (gly residues). The span at 677-701 (GSKSDSGSHNLSSGSGSRSNVSTGG) shows a compositional bias: low complexity. Asn686 and Asn696 each carry an N-linked (GlcNAc...) asparagine glycan. A compositionally biased stretch (polar residues) spans 722–733 (TGKTQSGSPSVA).

N-glycosylated. In terms of tissue distribution, detected in terminal tubule cells of the submandibular gland (at protein level). Expressed in submandibular salivary glands of 3-day-old males but not adults. Expression in adult submandibular glands is restricted to females. Isoform 5 is expressed in both 3-day-old and adult sublingual glands.

It localises to the secreted. The protein is Submandibular gland protein C (Muc19) of Mus musculus (Mouse).